The sequence spans 430 residues: Asparagine--tRNA ligase (430 aa).

The protein belongs to the class-II aminoacyl-tRNA synthetase family. As to quaternary structure, homodimer.

It localises to the cytoplasm. It catalyses the reaction tRNA(Asn) + L-asparagine + ATP = L-asparaginyl-tRNA(Asn) + AMP + diphosphate + H(+). This Staphylococcus aureus (strain MSSA476) protein is Asparagine--tRNA ligase.